We begin with the raw amino-acid sequence, 802 residues long: MRFLQVYKSSALIGLIILLASKVNLAEAKRKLVATSLVTCMENSQLSANSFDVVFNPDDRSLHYDLDMSTQIDSYIFADIDVYAYGFKIITKNVDLCSINWKQFCPVHPGNIQIDSIEYISSEYVNEIPGIAYQVPDIDAYARVKITNNVSEYLACIQIYFSNGKTVSQIGVKWATAVVAGIGLLLSAILSTFGNSTAASHISANTMSLFLYFQSVVVVAMQHVHRVPPIAAAWAENLVWSMGLIRISFMQRIFRWYVQSTGGTPSLYLTSTSMSVLAQRSWQYLMELPLIKRATNVLYGNANTLIFRGIKRLGYKMGIENTSIVCTGFTFFVLCGYVLAGFIIVFKCCVELATRLGWIQKARFWEFRKQWRMILKGALLRYIYIGFVQLTILSFWEFTERDSPAVIVIACLFILLSCGLMLWAAWRTVFFARRSVALYNNPAALLYGDEYVLHKYGFFYTMFNANHYWWNIVLLSYIFVKSLLVGFAQASGQTQVLFMFILDLFYFVAIIYYKPYLDRPTNIMNILIATVTVVNSFLFMFFSDLFNQSYKVAAIMGWIFFIMNAAFSFILLMMILAFAGMMLFSKNPDLRFKPAKDDRTSFQRNTMKPEGTVNRSVANELLALGNVAKDHDDNSDYESNDTGVNDELKQAQDETTPTTVTSSDDNKPTFSEKILSKFSRPKNENASTDALRVEAPKQQTFPHNLTNLSRENLSTLGSKPYPGHTRSQSDAHNGLINSFEEEDTSSNTDPFHDSTEGDLLDTSSSDGGFRSQNYVRDDSINSLGNNKQPLRKPPGFFDEGFM.

The N-terminal stretch at 1 to 28 is a signal peptide; the sequence is MRFLQVYKSSALIGLIILLASKVNLAEA. Residues 29–169 are Lumenal-facing; that stretch reads KRKLVATSLV…YFSNGKTVSQ (141 aa). Residue Asn149 is glycosylated (N-linked (GlcNAc...) asparagine). Residues 170 to 190 traverse the membrane as a helical segment; it reads IGVKWATAVVAGIGLLLSAIL. Topologically, residues 191-200 are cytoplasmic; the sequence is STFGNSTAAS. A helical membrane pass occupies residues 201-221; the sequence is HISANTMSLFLYFQSVVVVAM. Over 222 to 229 the chain is Lumenal; it reads QHVHRVPP. Residues 230–250 traverse the membrane as a helical segment; sequence IAAAWAENLVWSMGLIRISFM. The Cytoplasmic portion of the chain corresponds to 251 to 255; it reads QRIFR. The chain crosses the membrane as a helical span at residues 256–278; it reads WYVQSTGGTPSLYLTSTSMSVLA. The Lumenal segment spans residues 279–323; that stretch reads QRSWQYLMELPLIKRATNVLYGNANTLIFRGIKRLGYKMGIENTS. Residue Asn321 is glycosylated (N-linked (GlcNAc...) asparagine). A helical transmembrane segment spans residues 324-344; it reads IVCTGFTFFVLCGYVLAGFII. Over 345–377 the chain is Cytoplasmic; the sequence is VFKCCVELATRLGWIQKARFWEFRKQWRMILKG. A helical membrane pass occupies residues 378–398; the sequence is ALLRYIYIGFVQLTILSFWEF. Residues 399–405 are Lumenal-facing; that stretch reads TERDSPA. The chain crosses the membrane as a helical span at residues 406–426; the sequence is VIVIACLFILLSCGLMLWAAW. Over 427–467 the chain is Cytoplasmic; it reads RTVFFARRSVALYNNPAALLYGDEYVLHKYGFFYTMFNANH. A helical membrane pass occupies residues 468-488; the sequence is YWWNIVLLSYIFVKSLLVGFA. The Lumenal portion of the chain corresponds to 489–495; that stretch reads QASGQTQ. Residues 496–516 traverse the membrane as a helical segment; that stretch reads VLFMFILDLFYFVAIIYYKPY. Residues 517-525 are Cytoplasmic-facing; sequence LDRPTNIMN. A helical membrane pass occupies residues 526-546; the sequence is ILIATVTVVNSFLFMFFSDLF. N-linked (GlcNAc...) asparagine glycosylation is present at Asn547. At 547-557 the chain is on the lumenal side; sequence NQSYKVAAIMG. Residues 558-578 form a helical membrane-spanning segment; the sequence is WIFFIMNAAFSFILLMMILAF. Residues 579–802 lie on the Cytoplasmic side of the membrane; the sequence is AGMMLFSKNP…PPGFFDEGFM (224 aa). Ser616 and Ser635 each carry phosphoserine. The segment at 629–802 is disordered; the sequence is KDHDDNSDYE…PPGFFDEGFM (174 aa). Composition is skewed to polar residues over residues 653 to 663, 697 to 717, and 761 to 788; these read DETTPTTVTSS, KQQT…STLG, and DTSS…NNKQ. Phosphoserine occurs at positions 779 and 782.

It belongs to the transient receptor potential (TRP) ion channel family.

The protein localises to the endoplasmic reticulum membrane. In terms of biological role, may be responsible for the transport of FAD into the endoplasmic reticulum lumen, where it is required for oxidative protein folding. The polypeptide is Putative flavin carrier protein 3 (FLC3) (Saccharomyces cerevisiae (strain ATCC 204508 / S288c) (Baker's yeast)).